We begin with the raw amino-acid sequence, 31 residues long: Kallikrein-1 (31 aa).

A Peptidase S1 domain is found at 1-31 (VIGGQECARDSHPWQAAVYHFSDIECGGVLV).

This sequence belongs to the peptidase S1 family. Kallikrein subfamily.

It carries out the reaction Preferential cleavage of Arg-|-Xaa bonds in small molecule substrates. Highly selective action to release kallidin (lysyl-bradykinin) from kininogen involves hydrolysis of Met-|-Xaa or Leu-|-Xaa.. Glandular kallikreins cleave Met-Lys and Arg-Ser bonds in kininogen to release Lys-bradykinin. In Cavia porcellus (Guinea pig), this protein is Kallikrein-1.